Here is a 465-residue protein sequence, read N- to C-terminus: tRNA-2-methylthio-N(6)-dimethylallyladenosine synthase (465 aa).

One can recognise an MTTase N-terminal domain in the interval 26–141 (MRAHIITYGC…LPEALKANER (116 aa)). Positions 35, 71, 104, 173, 177, and 180 each coordinate [4Fe-4S] cluster. In terms of domain architecture, Radical SAM core spans 159–388 (PKGALSAHVT…IEKQKEWSYR (230 aa)). Residues 391–453 (LEWVGKTVEV…PHLLFGEVVG (63 aa)) enclose the TRAM domain.

This sequence belongs to the methylthiotransferase family. MiaB subfamily. As to quaternary structure, monomer. The cofactor is [4Fe-4S] cluster.

Its subcellular location is the cytoplasm. It catalyses the reaction N(6)-dimethylallyladenosine(37) in tRNA + (sulfur carrier)-SH + AH2 + 2 S-adenosyl-L-methionine = 2-methylsulfanyl-N(6)-dimethylallyladenosine(37) in tRNA + (sulfur carrier)-H + 5'-deoxyadenosine + L-methionine + A + S-adenosyl-L-homocysteine + 2 H(+). Catalyzes the methylthiolation of N6-(dimethylallyl)adenosine (i(6)A), leading to the formation of 2-methylthio-N6-(dimethylallyl)adenosine (ms(2)i(6)A) at position 37 in tRNAs that read codons beginning with uridine. The protein is tRNA-2-methylthio-N(6)-dimethylallyladenosine synthase of Thermus thermophilus (strain ATCC 27634 / DSM 579 / HB8).